The sequence spans 221 residues: Ribosomal RNA large subunit methyltransferase E (221 aa).

The S-adenosyl-L-methionine site is built by Gly-60, Trp-62, Asp-89, Asp-105, and Asp-134. The active-site Proton acceptor is the Lys-174.

The protein belongs to the class I-like SAM-binding methyltransferase superfamily. RNA methyltransferase RlmE family.

It localises to the cytoplasm. It carries out the reaction uridine(2552) in 23S rRNA + S-adenosyl-L-methionine = 2'-O-methyluridine(2552) in 23S rRNA + S-adenosyl-L-homocysteine + H(+). Specifically methylates the uridine in position 2552 of 23S rRNA at the 2'-O position of the ribose in the fully assembled 50S ribosomal subunit. The polypeptide is Ribosomal RNA large subunit methyltransferase E (Cupriavidus taiwanensis (strain DSM 17343 / BCRC 17206 / CCUG 44338 / CIP 107171 / LMG 19424 / R1) (Ralstonia taiwanensis (strain LMG 19424))).